The sequence spans 658 residues: Katanin p80 WD40 repeat-containing subunit B1 (658 aa).

Positions 1-284 (MATPVVTKTA…VADLAICNDQ (284 aa)) are interaction with dynein. Residues 1–300 (MATPVVTKTA…SQSNVSSYVV (300 aa)) form an interaction with centrosomes region. WD repeat units lie at residues 18 to 58 (AHAS…CIMS), 61 to 100 (GHTSPVESVRLNTPEELIVAGSQSGSIRVWDLEAAKILRT), 103 to 142 (GHKANICSLDFHPYGEFVASGSQDTNIKLWDIRRKGCVFR), 145 to 184 (GHSQAVRCLRFSPDGKWLASAADDHTVKLWDLTAGKMMSE), 187 to 226 (GHTGPVNVVEFHPNEYLLASGSSDRTIRFWDLEKFQVVSC), and 229 to 269 (GEPG…DVVL). The tract at residues 285–437 (LIGVAFSQSN…LPQLPVPNLE (153 aa)) is interaction with PAFAH1B1. Positions 311–329 (VTQDPVQANQPLTQQTPNP) are enriched in polar residues. 2 disordered regions span residues 311 to 419 (VTQD…EVSK) and 434 to 458 (PNLEVPARPSVMTSTPAPKGEPDII). A compositionally biased stretch (basic and acidic residues) spans 352 to 374 (HNSESERRSPSSEDDRDERESRA). At Thr-395 the chain carries Phosphothreonine. An interaction with KATNA1 and NDEL1 region spans residues 436-658 (LEVPARPSVM…ELHLLMASLD (223 aa)).

Belongs to the WD repeat KATNB1 family. As to quaternary structure, interacts with KATNA1. This interaction enhances the microtubule binding and severing activity of KATNA1 and also targets this activity to the centrosome. This interaction is weakly competed by KATNBL1 which has a lower affinity for it. Interacts with ASPM; the katanin complex formation KATNA1:KATNB1 is required for the association of ASPM. Interacts with dynein, microtubules, NDEL1 and PAFAH1B1. Interacts with KATNAL1; this interaction is weakly competed by KATNBL1 which has a lower affinity for it. Interacts with CAMSAP2 and CAMSAP3; leading to regulate the length of CAMSAP-decorated microtubule stretches.

The protein resides in the cytoplasm. It localises to the cytoskeleton. The protein localises to the microtubule organizing center. Its subcellular location is the centrosome. It is found in the spindle pole. The protein resides in the spindle. Functionally, participates in a complex which severs microtubules in an ATP-dependent manner. May act to target the enzymatic subunit of this complex to sites of action such as the centrosome. Microtubule severing may promote rapid reorganization of cellular microtubule arrays and the release of microtubules from the centrosome following nucleation. Microtubule release from the mitotic spindle poles may allow depolymerization of the microtubule end proximal to the spindle pole, leading to poleward microtubule flux and poleward motion of chromosome. The function in regulating microtubule dynamics at spindle poles seems to depend on the association of the katanin KATNA1:KATNB1 complex with ASPM which recruits it to microtubules. Reversely KATNA1:KATNB1 can enhance ASPM blocking activity on microtubule minus-end growth. Microtubule release within the cell body of neurons may be required for their transport into neuronal processes by microtubule-dependent motor proteins. This transport is required for axonal growth. The chain is Katanin p80 WD40 repeat-containing subunit B1 (Katnb1) from Mus musculus (Mouse).